Consider the following 529-residue polypeptide: Cytochrome P450 monooxygenase oblE (529 aa).

The chain crosses the membrane as a helical span at residues Trp38–Trp58. Cys477 serves as a coordination point for heme.

It belongs to the cytochrome P450 family. Heme serves as cofactor.

The protein localises to the membrane. It participates in secondary metabolite biosynthesis; terpenoid biosynthesis. Its function is as follows. Cytochrome P450 monooxygenase; part of the gene cluster that mediates the biosynthesis of the sesterterpenes ophiobolins, fungal phytotoxins with potential anti-cancer activities. The first step of the pathway is performed by the sesterterpene synthase oblA that possesses both prenyl transferase and terpene cyclase activity, converting isopentenyl diphosphate and dimethylallyl diphosphate into geranylfarnesyl diphosphate (GFPP) and further converting GFPP into ophiobolin F, respectively. Other sesterterpenoids (C(25) terpenoids) are found as minor products of oblA. The cytochrome P450 monooxygenase oblB then catalyzes a four-step oxidative transformation of ophiobolin F to yield ophiobolin C. The function of the cytochrome P450 monooxygenase oblE has still to be determined. This chain is Cytochrome P450 monooxygenase oblE, found in Emericella variicolor (Aspergillus stellatus).